The sequence spans 214 residues: Ribosomal RNA small subunit methyltransferase G (214 aa).

S-adenosyl-L-methionine-binding positions include Gly72, Phe77, 125–126 (VE), and Arg141.

It belongs to the methyltransferase superfamily. RNA methyltransferase RsmG family.

It is found in the cytoplasm. It carries out the reaction guanosine(527) in 16S rRNA + S-adenosyl-L-methionine = N(7)-methylguanosine(527) in 16S rRNA + S-adenosyl-L-homocysteine. Functionally, specifically methylates the N7 position of guanine in position 527 of 16S rRNA. The polypeptide is Ribosomal RNA small subunit methyltransferase G (Sinorhizobium fredii (strain NBRC 101917 / NGR234)).